A 31-amino-acid polypeptide reads, in one-letter code: Protamine PTP4 (31 aa).

The disordered stretch occupies residues 1–31 (MPRRRRASRRIRRRRRPRVSRRRRGGRRRRR).

Testis.

The protein resides in the nucleus. The protein localises to the chromosome. Protamines substitute for histones in the chromatin of sperm during the haploid phase of spermatogenesis. They compact sperm DNA into a highly condensed, stable and inactive complex. This Oncorhynchus mykiss (Rainbow trout) protein is Protamine PTP4.